Reading from the N-terminus, the 100-residue chain is Guanine nucleotide-binding protein subunit gamma 2 (100 aa).

N-acetylmethionine is present on M1. Residues 19 to 55 are a coiled coil; it reads TRGKHRIQAELKRLEQEARFLEEELEQLEKMDNASAS. A G protein gamma domain is found at 21 to 100; sequence GKHRIQAELK…EAKRCGCSIL (80 aa). The tract at residues 90–96 is regulates lipidation and cell membrane subcellular localization; sequence KEAKRCG. The S-palmitoyl cysteine moiety is linked to residue C95. The residue at position 97 (C97) is a Cysteine methyl ester. C97 carries S-farnesyl cysteine lipidation. Positions 98–100 are cleaved as a propeptide — removed in mature form; it reads SIL.

In terms of assembly, g proteins are composed of 3 units, alpha, beta and gamma. GPG1 interacts with the beta subunit GB1. The dimer GB1-GG2 interacts with NDL1, NDL2 and NDL3. Binds to NUDT7. Mostly expressed in roots (excluded from the stele), seedlings (especially at the hypocotyl/root junction), floral stems, floral buds, flowers and siliques, and, to a lower extent, in leaves (restricted to guard cells). Also present in hydathods.

It localises to the cell membrane. In terms of biological role, guanine nucleotide-binding proteins (G proteins) are involved as a modulator or transducer in various transmembrane signaling systems. The beta and gamma chains are required for the GTPase activity, for replacement of GDP by GTP, and for G protein-effector interaction. Involved in the abscisic acid (ABA) and ethylene signaling pathways. Regulates basipetal transport of auxin (IAA) in roots and hypocotyls, and thus modulates root architecture (e.g. lateral root formation). The heterotrimeric G-protein controls defense responses to necrotrophic and vascular fungi probably by modulating cell wall-related genes expression; involved in resistance to Plectosphaerella cucumerina. The protein is Guanine nucleotide-binding protein subunit gamma 2 (GG2) of Arabidopsis thaliana (Mouse-ear cress).